We begin with the raw amino-acid sequence, 180 residues long: 3-hydroxyanthranilate 3,4-dioxygenase (180 aa).

Residue R46 participates in O2 binding. The Fe cation site is built by H50, E56, and H94. A substrate-binding site is contributed by E56. Substrate contacts are provided by R98 and E109. C124, C127, C161, and C164 together coordinate Fe cation.

It belongs to the 3-HAO family. As to quaternary structure, homodimer. It depends on Fe(2+) as a cofactor.

The catalysed reaction is 3-hydroxyanthranilate + O2 = (2Z,4Z)-2-amino-3-carboxymuconate 6-semialdehyde. It participates in cofactor biosynthesis; NAD(+) biosynthesis; quinolinate from L-kynurenine: step 3/3. Functionally, catalyzes the oxidative ring opening of 3-hydroxyanthranilate to 2-amino-3-carboxymuconate semialdehyde, which spontaneously cyclizes to quinolinate. This Jannaschia sp. (strain CCS1) protein is 3-hydroxyanthranilate 3,4-dioxygenase.